The primary structure comprises 86 residues: MKVSVVITLAVLGVMFVWASAAELEERGSDQRDSPAWLKSMERIFQSEERECRKMFGGCSVDSDCCAHLGCKPTLKYCAWDGTFGK.

Residues 1–21 (MKVSVVITLAVLGVMFVWASA) form the signal peptide. A propeptide spanning residues 22–50 (AELEERGSDQRDSPAWLKSMERIFQSEER) is cleaved from the precursor. 3 disulfides stabilise this stretch: Cys52-Cys66, Cys59-Cys71, and Cys65-Cys78. A Phenylalanine amide modification is found at Phe84.

It belongs to the neurotoxin 10 (Hwtx-1) family. 28 (Jztx-11) subfamily. In terms of tissue distribution, expressed by the venom gland.

Its subcellular location is the secreted. This toxin acts as a voltage-dependent gating-modifier. It inhibits the sodium conductance (IC(50)=124 nM) and slows the fast inactivation (EC(50)=1180 nM) of Nav1.5/SCN5A. It significantly shifts the activation to more depolarized voltages and decreases the deactivation of Nav1.5 currents upon extreme depolarization, but only slightly affects voltage-dependence of steady-state inactivation. In addition, this toxin causes an approximately five-fold decrease in the rate of recovery from inactivation and an approximately 1.9-fold reduction in the closed-state inactivation rate. This toxin integrates the functions of site 3 toxins (alpha-scorpion toxins) with site 4 toxins (beta-scorpion and spider toxins) by targeting multiple sites on Nav1.5. Also shows inhibition of voltage-gated potassium channels (5 uM completely inhibits Kv2.1/KCNB1, whereas 5 uM moderately inhibits Kv4.2/KCND2 Kv4.1/KCND1 channels). This chain is Kappa-theraphotoxin-Cg1a 2, found in Chilobrachys guangxiensis (Chinese earth tiger tarantula).